A 558-amino-acid polypeptide reads, in one-letter code: Glutamine--tRNA ligase (558 aa).

A 'HIGH' region motif is present at residues 36-46 (PEPNGYLHIGH). ATP is bound by residues 37 to 39 (EPN) and 43 to 49 (HIGHAKS). Residues aspartate 69 and tyrosine 214 each contribute to the L-glutamine site. Residues threonine 233, 263–264 (RL), and 271–273 (LSK) contribute to the ATP site. The 'KMSKS' region motif lies at 270 to 274 (LLSKR).

Belongs to the class-I aminoacyl-tRNA synthetase family. Monomer.

It localises to the cytoplasm. The catalysed reaction is tRNA(Gln) + L-glutamine + ATP = L-glutaminyl-tRNA(Gln) + AMP + diphosphate. This is Glutamine--tRNA ligase from Bradyrhizobium diazoefficiens (strain JCM 10833 / BCRC 13528 / IAM 13628 / NBRC 14792 / USDA 110).